Reading from the N-terminus, the 703-residue chain is Ubiquitin-like modifier-activating enzyme ATG7 (703 aa).

Ala-2 bears the N-acetylalanine mark. The short motif at Phe-15–Pro-17 is the FAP motif element. A Glycyl lysine isopeptide (Lys-Gly) (interchain with G-Cter in ubiquitin) cross-link involves residue Lys-45. Residue Cys-572 is the Glycyl thioester intermediate of the active site. Ser-698 is subject to Phosphoserine.

It belongs to the ATG7 family. As to quaternary structure, homodimer. Interacts with ATG3; this interaction is essential for the transfer of ATG8-like proteins's thioester from ATG7 to ATG3 and plays a role in the conjugation of ATG12 to ATG5. Interacts with ATG12. Forms intermediate conjugates with GABARAPL1. Forms intermediate conjugates with ATG8-like proteins such as GABARAP, GABARAPL2 or MAP1LC3A. Interacts with EP300 acetyltransferase. Interacts with FOXO1. Post-translationally, acetylated by EP300. Polyubiquitinated on Lys-45 via 'Lys-63'-linked ubiquitin by TRIM32; this modification positiely regulates ATG8 and ATG12 activating enzyme activity leading to initiation of autophagy under metabolic stress. As to expression, widely expressed, especially in kidney, liver, lymph nodes and bone marrow.

The protein resides in the cytoplasm. The protein localises to the preautophagosomal structure. In terms of biological role, E1-like activating enzyme involved in the 2 ubiquitin-like systems required for cytoplasm to vacuole transport (Cvt) and autophagy. Activates ATG12 for its conjugation with ATG5 as well as the ATG8 family proteins for their conjugation with phosphatidylethanolamine. Both systems are needed for the ATG8 association to Cvt vesicles and autophagosomes membranes. Required for autophagic death induced by caspase-8 inhibition. Facilitates LC3-I lipidation with phosphatidylethanolamine to form LC3-II which is found on autophagosomal membranes. Required for mitophagy which contributes to regulate mitochondrial quantity and quality by eliminating the mitochondria to a basal level to fulfill cellular energy requirements and preventing excess ROS production. Modulates p53/TP53 activity to regulate cell cycle and survival during metabolic stress. Also plays a key role in the maintenance of axonal homeostasis, the prevention of axonal degeneration, the maintenance of hematopoietic stem cells, the formation of Paneth cell granules, as well as in adipose differentiation. Plays a role in regulating the liver clock and glucose metabolism by mediating the autophagic degradation of CRY1 (clock repressor) in a time-dependent manner. This is Ubiquitin-like modifier-activating enzyme ATG7 from Homo sapiens (Human).